The primary structure comprises 71 residues: Peptide Ctri9819 (71 aa).

A signal peptide spans 1-23; sequence MKTVSTVAILAIFLLIVITTIET. Leu-34 carries the post-translational modification Leucine amide. The propeptide occupies 38–71; the sequence is SKLETFKRIARTLSAGISAKRSLEDVNSLTGMSS.

This sequence belongs to the non-disulfide-bridged peptide (NDBP) superfamily. Short antimicrobial peptide (group 4) family. In terms of tissue distribution, expressed by the venom gland.

Its subcellular location is the secreted. Its function is as follows. Antimicrobial peptide. In Chaerilus tricostatus (Scorpion), this protein is Peptide Ctri9819.